A 377-amino-acid chain; its full sequence is S-adenosylmethionine synthase (377 aa).

Histidine 14 is a binding site for ATP. A Mg(2+)-binding site is contributed by aspartate 16. Position 42 (glutamate 42) interacts with K(+). An L-methionine-binding site is contributed by glutamine 98. Residues glutamine 98–leucine 108 are flexible loop. Residues aspartate 162–lysine 164, arginine 228–phenylalanine 229, aspartate 237, arginine 243–lysine 244, alanine 260, and lysine 264 contribute to the ATP site. Position 237 (aspartate 237) interacts with L-methionine. Position 268 (lysine 268) interacts with L-methionine.

Belongs to the AdoMet synthase family. Homotetramer; dimer of dimers. The cofactor is Mg(2+). It depends on K(+) as a cofactor.

It localises to the cytoplasm. It catalyses the reaction L-methionine + ATP + H2O = S-adenosyl-L-methionine + phosphate + diphosphate. Its pathway is amino-acid biosynthesis; S-adenosyl-L-methionine biosynthesis; S-adenosyl-L-methionine from L-methionine: step 1/1. Its function is as follows. Catalyzes the formation of S-adenosylmethionine (AdoMet) from methionine and ATP. The overall synthetic reaction is composed of two sequential steps, AdoMet formation and the subsequent tripolyphosphate hydrolysis which occurs prior to release of AdoMet from the enzyme. This is S-adenosylmethionine synthase from Mesoplasma florum (strain ATCC 33453 / NBRC 100688 / NCTC 11704 / L1) (Acholeplasma florum).